Here is a 508-residue protein sequence, read N- to C-terminus: Ribonuclease Y (508 aa).

Residues 2–22 (IITALIAIAVGFLIGYLARKI) traverse the membrane as a helical segment. The KH domain maps to 198 to 261 (TVSVVTLPND…EVARIALEKL (64 aa)). Residues 324–417 (VLKHSIEVAH…VQAADAISAA (94 aa)) form the HD domain.

This sequence belongs to the RNase Y family.

It is found in the cell membrane. In terms of biological role, endoribonuclease that initiates mRNA decay. This Thermoanaerobacter pseudethanolicus (strain ATCC 33223 / 39E) (Clostridium thermohydrosulfuricum) protein is Ribonuclease Y.